A 185-amino-acid polypeptide reads, in one-letter code: Ribosome-recycling factor (185 aa).

The protein belongs to the RRF family.

Its subcellular location is the cytoplasm. Functionally, responsible for the release of ribosomes from messenger RNA at the termination of protein biosynthesis. May increase the efficiency of translation by recycling ribosomes from one round of translation to another. This is Ribosome-recycling factor from Klebsiella pneumoniae (strain 342).